Here is a 382-residue protein sequence, read N- to C-terminus: Adaptive-response sensory kinase SasA (382 aa).

Residues 160 to 382 form the Histidine kinase domain; sequence MLAHDLRSPL…CFHFTLPVYR (223 aa). Histidine 163 bears the Phosphohistidine; by autocatalysis mark.

In terms of assembly, homooligomerizes. Interacts with KaiC. Participates in the KaiABC clock complex, whose core is composed of a KaiC homohexamer, 6 KaiB and up to 6 KaiA dimers. SasA and KaiB(fs) compete to bind to KaiC.

The catalysed reaction is ATP + protein L-histidine = ADP + protein N-phospho-L-histidine.. Its function is as follows. Member of the two-component regulatory system SasA/RpaA involved in genome-wide circadian gene expression. One of several clock output pathways. Participates in the Kai clock protein complex, the main circadian regulator in cyanobacteria, via its interaction with KaiC. KaiC enhances the autophosphorylation activity of SasA, which then transfers its phosphate group to RpaA to activate it. In addition to its output function, recruits fold-shifted KaiB (KaiB(fs)) to KaiC to cooperatively form the KaiB(6):KaiC(6) complex (independent of SasA kinase activity). Required for robustness of the circadian rhythm of gene expression and is involved in clock output, also required for adaptation to light/dark cycles. This Crocosphaera subtropica (strain ATCC 51142 / BH68) (Cyanothece sp. (strain ATCC 51142)) protein is Adaptive-response sensory kinase SasA.